We begin with the raw amino-acid sequence, 176 residues long: ATP-dependent protease subunit HslV (176 aa).

Residue threonine 5 is part of the active site. Positions 161, 164, and 167 each coordinate Na(+).

This sequence belongs to the peptidase T1B family. HslV subfamily. As to quaternary structure, a double ring-shaped homohexamer of HslV is capped on each side by a ring-shaped HslU homohexamer. The assembly of the HslU/HslV complex is dependent on binding of ATP.

The protein resides in the cytoplasm. It catalyses the reaction ATP-dependent cleavage of peptide bonds with broad specificity.. Its activity is regulated as follows. Allosterically activated by HslU binding. In terms of biological role, protease subunit of a proteasome-like degradation complex believed to be a general protein degrading machinery. In Thermoanaerobacter pseudethanolicus (strain ATCC 33223 / 39E) (Clostridium thermohydrosulfuricum), this protein is ATP-dependent protease subunit HslV.